We begin with the raw amino-acid sequence, 241 residues long: DNA repair protein RecO (241 aa).

It belongs to the RecO family.

Involved in DNA repair and RecF pathway recombination. The polypeptide is DNA repair protein RecO (Xanthomonas campestris pv. campestris (strain B100)).